Reading from the N-terminus, the 727-residue chain is Anaphase-promoting complex subunit 5 (727 aa).

Ser180 is subject to Phosphoserine. 13 TPR repeats span residues 194 to 234, 235 to 285, 286 to 322, 323 to 359, 360 to 390, 391 to 438, 439 to 472, 473 to 512, 513 to 552, 553 to 592, 593 to 632, 633 to 668, and 669 to 708; these read QKQA…FNPD, FAEA…GRSL, RYAA…SNDH, VCLQ…FGLP, RAFA…SELI, DISI…TESF, AVAL…FPPN, SQHA…ALNG, IEGV…TEMV, ISVL…QYLA, SETV…ILDK, GRAM…NLTE, and AKNY…CAMV. Thr217 carries the phosphothreonine modification.

This sequence belongs to the APC5 family. The mammalian APC/C is composed at least of 14 distinct subunits ANAPC1, ANAPC2, CDC27/APC3, ANAPC4, ANAPC5, CDC16/APC6, ANAPC7, CDC23/APC8, ANAPC10, ANAPC11, CDC26/APC12, ANAPC13, ANAPC15 and ANAPC16 that assemble into a complex of at least 19 chains with a combined molecular mass of around 1.2 MDa; APC/C interacts with FZR1 and FBXO5.

Its subcellular location is the nucleus. The protein localises to the cytoplasm. The protein resides in the cytoskeleton. It localises to the spindle. It functions in the pathway protein modification; protein ubiquitination. In terms of biological role, component of the anaphase promoting complex/cyclosome (APC/C), a cell cycle-regulated E3 ubiquitin ligase that controls progression through mitosis and the G1 phase of the cell cycle. The APC/C complex acts by mediating ubiquitination and subsequent degradation of target proteins: it mainly mediates the formation of 'Lys-11'-linked polyubiquitin chains and, to a lower extent, the formation of 'Lys-48'- and 'Lys-63'-linked polyubiquitin chains. The APC/C complex catalyzes assembly of branched 'Lys-11'-/'Lys-48'-linked branched ubiquitin chains on target proteins. This chain is Anaphase-promoting complex subunit 5 (Anapc5), found in Rattus norvegicus (Rat).